The following is a 438-amino-acid chain: Trigger factor (438 aa).

The 86-residue stretch at 160-245 (DDKVTIDFVG…VKKIQQAELP (86 aa)) folds into the PPIase FKBP-type domain.

This sequence belongs to the FKBP-type PPIase family. Tig subfamily.

The protein resides in the cytoplasm. It catalyses the reaction [protein]-peptidylproline (omega=180) = [protein]-peptidylproline (omega=0). Its function is as follows. Involved in protein export. Acts as a chaperone by maintaining the newly synthesized protein in an open conformation. Functions as a peptidyl-prolyl cis-trans isomerase. The polypeptide is Trigger factor (Francisella tularensis subsp. holarctica (strain LVS)).